A 315-amino-acid chain; its full sequence is Homoserine kinase (315 aa).

97 to 107 (PPARGLGSSAT) is an ATP binding site.

The protein belongs to the GHMP kinase family. Homoserine kinase subfamily.

Its subcellular location is the cytoplasm. The catalysed reaction is L-homoserine + ATP = O-phospho-L-homoserine + ADP + H(+). Its pathway is amino-acid biosynthesis; L-threonine biosynthesis; L-threonine from L-aspartate: step 4/5. Its function is as follows. Catalyzes the ATP-dependent phosphorylation of L-homoserine to L-homoserine phosphate. The polypeptide is Homoserine kinase (Parasynechococcus marenigrum (strain WH8102)).